We begin with the raw amino-acid sequence, 366 residues long: Galactoside alpha-(1,2)-fucosyltransferase 1 (366 aa).

At Met1–His8 the chain is on the cytoplasmic side. Residues Leu9 to Phe25 traverse the membrane as a helical; Signal-anchor for type II membrane protein segment. Residues Leu26–Pro366 are Lumenal-facing. 3 N-linked (GlcNAc...) asparagine glycosylation sites follow: Asn66, Asn302, and Asn328.

Belongs to the glycosyltransferase 11 family.

The protein resides in the golgi apparatus. It localises to the golgi stack membrane. It catalyses the reaction a beta-D-galactosyl-(1-&gt;4)-N-acetyl-beta-D-glucosaminyl derivative + GDP-beta-L-fucose = an alpha-L-Fuc-(1-&gt;2)-beta-D-Gal-(1-&gt;4)-beta-D-GlcNAc derivative + GDP + H(+). It carries out the reaction a ganglioside GA1 + GDP-beta-L-fucose = a ganglioside Fuc-GA1 + GDP + H(+). The catalysed reaction is a beta-D-Gal-(1-&gt;3)-beta-D-GlcNAc-(1-&gt;3)-beta-D-Gal-(1-&gt;4)-beta-D-Glc-(1&lt;-&gt;1')-Cer(d18:1(4E)) + GDP-beta-L-fucose = alpha-L-fucosyl-(1-&gt;2)- beta-D-galactosyl-(1-&gt;3)-N-acetyl-beta-D-glucosaminyl-(1-&gt;3)-beta-D-galactosyl-(1-&gt;4)-beta-D-glucosyl-(1&lt;-&gt;1')-N-acylsphing-4-enine + GDP + H(+). The enzyme catalyses a neolactoside nLc4Cer(d18:1(4E)) + GDP-beta-L-fucose = a neolactoside IV(2)-alpha-Fuc-nLc4Cer(d18:1(4E)) + GDP + H(+). It catalyses the reaction a ganglioside GM1 + GDP-beta-L-fucose = a ganglioside Fuc-GM1 + GDP + H(+). It carries out the reaction beta-D-galactosyl-(1-&gt;3)-N-acetyl-D-galactosamine + GDP-beta-L-fucose = alpha-L-fucosyl-(1-&gt;2)-beta-D-galactosyl-(1-&gt;3)-N-acetyl-D-galactosamine + GDP + H(+). It participates in protein modification; protein glycosylation. Catalyzes the transfer of L-fucose, from a guanosine diphosphate-beta-L-fucose, to the terminal galactose residue of glycoconjugates through an alpha(1,2) linkage leading to H antigen synthesis that is an intermediate substrate in the synthesis of ABO blood group antigens. H antigen is essential for maturation of the glomerular layer of the main olfactory bulb, in cell migration and early cell-cell contacts during tumor associated angiogenesis. Preferentially fucosylates soluble lactose and to a lesser extent fucosylates glycolipids gangliosides GA1 and GM1a. The sequence is that of Galactoside alpha-(1,2)-fucosyltransferase 1 from Ateles belzebuth (White-bellied spider monkey).